Here is a 463-residue protein sequence, read N- to C-terminus: Elongation factor 1-alpha (463 aa).

G2 is modified (n,N,N-trimethylglycine). N6,N6-dimethyllysine; alternate is present on K3. K3 is subject to N6-methyllysine; alternate. The tr-type G domain occupies 5–239 (KNHVNVVVIG…DAIEPPSRPT (235 aa)). The segment at 14–21 (GHVDSGKS) is G1. 14–21 (GHVDSGKS) provides a ligand contact to GTP. Residue K30 is modified to N6-methyllysine. The tract at residues 70–74 (GITID) is G2. K79 bears the N6,N6,N6-trimethyllysine mark. The tract at residues 91 to 94 (DAPG) is G3. GTP is bound by residues 91-95 (DAPGH) and 153-156 (NKMD). The interval 153–156 (NKMD) is G4. The interval 191 to 193 (SGW) is G5. The residue at position 315 (K315) is an N6,N6-dimethyllysine; alternate. Position 315 is an N6-methyllysine; alternate (K315). Position 389 is an N6-methyllysine (K389).

This sequence belongs to the TRAFAC class translation factor GTPase superfamily. Classic translation factor GTPase family. EF-Tu/EF-1A subfamily.

Its subcellular location is the cytoplasm. Its function is as follows. This protein promotes the GTP-dependent binding of aminoacyl-tRNA to the A-site of ribosomes during protein biosynthesis. This chain is Elongation factor 1-alpha (TEF), found in Puccinia graminis (Black stem rust fungus).